A 160-amino-acid polypeptide reads, in one-letter code: uncharacterized protein (160 aa).

The protein resides in the cytoplasm. It is found in the nucleus. This is an uncharacterized protein from Schizosaccharomyces pombe (strain 972 / ATCC 24843) (Fission yeast).